Reading from the N-terminus, the 155-residue chain is Ribosome-binding factor A (155 aa).

This sequence belongs to the RbfA family. In terms of assembly, monomer. Binds 30S ribosomal subunits, but not 50S ribosomal subunits or 70S ribosomes.

It is found in the cytoplasm. In terms of biological role, one of several proteins that assist in the late maturation steps of the functional core of the 30S ribosomal subunit. Associates with free 30S ribosomal subunits (but not with 30S subunits that are part of 70S ribosomes or polysomes). Required for efficient processing of 16S rRNA. May interact with the 5'-terminal helix region of 16S rRNA. This Methylocella silvestris (strain DSM 15510 / CIP 108128 / LMG 27833 / NCIMB 13906 / BL2) protein is Ribosome-binding factor A.